The following is a 269-amino-acid chain: Shikimate dehydrogenase (NADP(+)) (269 aa).

Residues 22-24 (TLS) and Thr-68 contribute to the shikimate site. Lys-72 acts as the Proton acceptor in catalysis. Shikimate-binding residues include Asn-93 and Asp-104. NADP(+) is bound by residues 128–132 (GAGGA), 152–157 (NRTKSR), and Phe-210. Tyr-212 provides a ligand contact to shikimate. Position 233 (Gly-233) interacts with NADP(+).

It belongs to the shikimate dehydrogenase family. Homodimer.

The catalysed reaction is shikimate + NADP(+) = 3-dehydroshikimate + NADPH + H(+). It functions in the pathway metabolic intermediate biosynthesis; chorismate biosynthesis; chorismate from D-erythrose 4-phosphate and phosphoenolpyruvate: step 4/7. In terms of biological role, involved in the biosynthesis of the chorismate, which leads to the biosynthesis of aromatic amino acids. Catalyzes the reversible NADPH linked reduction of 3-dehydroshikimate (DHSA) to yield shikimate (SA). The polypeptide is Shikimate dehydrogenase (NADP(+)) (Saccharolobus solfataricus (strain ATCC 35092 / DSM 1617 / JCM 11322 / P2) (Sulfolobus solfataricus)).